The sequence spans 60 residues: Conotoxin Cal6.30 (60 aa).

An N-terminal signal peptide occupies residues 1–22; sequence MKVTCVLTLAVLILTIGQIANA. 3 disulfides stabilise this stretch: Cys-31–Cys-47, Cys-38–Cys-51, and Cys-46–Cys-55.

Expressed by the venom duct.

The protein localises to the secreted. Probable neurotoxin. The sequence is that of Conotoxin Cal6.30 from Californiconus californicus (California cone).